The primary structure comprises 473 residues: H(+)/Cl(-) exchange transporter ClcA (473 aa).

The Cytoplasmic portion of the chain corresponds to 1-32; sequence MKTDTPSLETPQAARLRRRQLIRQLLERDKTP. Residues 33 to 69 traverse the membrane as a helical segment; sequence LAILFMAAVVGTLVGLAAVAFDKGVAWLQNQRMGALV. At 70–76 the chain is on the periplasmic side; the sequence is HTADNYP. The helical transmembrane segment at 77-100 threads the bilayer; sequence LLLTVAFLCSAVLAMFGYFLVRKY. Residues 106–110 carry the Selectivity filter part_1 motif; sequence GSGIP. Position 107 (serine 107) interacts with chloride. The segment at residues 109 to 116 is an intramembrane region (helical); that stretch reads IPEIEGAL. Residues 117–123 lie on the Cytoplasmic side of the membrane; that stretch reads EDQRPVR. Transmembrane regions (helical) follow at residues 124–141 and 148–166; these read WWRVLPVKFFGGLGTLGG and EGPTVQIGGNIGRMVLDIF. Residues 146–150 carry the Selectivity filter part_2 motif; it reads GREGP. Residues 167-176 are Cytoplasmic-facing; that stretch reads RLKGDEARHT. Intramembrane regions (helical) lie at residues 177–189 and 193–201; these read LLATGAAAGLAAA and PLAGILFII. Residues 202–214 lie on the Cytoplasmic side of the membrane; it reads EEMRPQFRYTLIS. Residues 215–232 traverse the membrane as a helical segment; that stretch reads IKAVFIGVIMSTIMYRIF. At 233–252 the chain is on the periplasmic side; the sequence is NHEVALIDVGKLSDAPLNTL. The chain crosses the membrane as a helical span at residues 253–281; the sequence is WLYLILGIIFGIFGPIFNKWVLGMQDLLH. The Cytoplasmic portion of the chain corresponds to 282-287; the sequence is RVHGGN. Residues 288-309 traverse the membrane as a helical segment; sequence ITKWILMGGAIGGLCGLLGFVA. At 310–329 the chain is on the periplasmic side; that stretch reads PATSGGGFNLIPIATAGNFS. The next 2 helical transmembrane spans lie at 330–349 and 355–376; these read MGMLVFIFVARVITTLLCFS and GIFAPMLALGTVLGTAFGMVAV. The Selectivity filter part_3 motif lies at 355-359; that stretch reads GIFAP. Isoleucine 356 and phenylalanine 357 together coordinate chloride. The Periplasmic segment spans residues 377 to 386; the sequence is ELFPQYHLEA. The helical intramembrane region spans 387 to 401; that stretch reads GTFAIAGMGALLAAS. The segment at residues 402–404 is an intramembrane region (note=Loop between two helices); that stretch reads IRA. The helical intramembrane region spans 405-416; it reads PLTGIILVLEMT. The note=Loop between two helices intramembrane region spans 417-421; the sequence is DNYQL. The chain crosses the membrane as a helical span at residues 422–438; that stretch reads ILPMIITGLGATLLAQF. Over 439–473 the chain is Cytoplasmic; sequence TGGKPLYSAILARTLAKQEAEQLARSKAASASENT. A chloride-binding site is contributed by tyrosine 445.

It belongs to the chloride channel (TC 2.A.49) family. ClcA subfamily. In terms of assembly, homodimer.

It localises to the cell inner membrane. The enzyme catalyses 2 chloride(in) + H(+)(out) = 2 chloride(out) + H(+)(in). Functionally, proton-coupled chloride transporter. Functions as antiport system and exchanges two chloride ions for 1 proton. Probably acts as an electrical shunt for an outwardly-directed proton pump that is linked to amino acid decarboxylation, as part of the extreme acid resistance (XAR) response. The chain is H(+)/Cl(-) exchange transporter ClcA from Escherichia coli O9:H4 (strain HS).